Consider the following 258-residue polypeptide: Trans-aconitate 2-methyltransferase (258 aa).

This sequence belongs to the methyltransferase superfamily. Tam family.

The protein localises to the cytoplasm. It carries out the reaction trans-aconitate + S-adenosyl-L-methionine = (E)-3-(methoxycarbonyl)pent-2-enedioate + S-adenosyl-L-homocysteine. Functionally, catalyzes the S-adenosylmethionine monomethyl esterification of trans-aconitate. The polypeptide is Trans-aconitate 2-methyltransferase (Yersinia pseudotuberculosis serotype O:1b (strain IP 31758)).